The following is a 420-amino-acid chain: 3-phosphoshikimate 1-carboxyvinyltransferase (420 aa).

Positions 20, 21, and 25 each coordinate 3-phosphoshikimate. Lys20 lines the phosphoenolpyruvate pocket. Arg119 lines the phosphoenolpyruvate pocket. 7 residues coordinate 3-phosphoshikimate: Ser161, Ser162, Gln163, Ser189, Asp303, Gln326, and Lys330. Phosphoenolpyruvate is bound at residue Gln163. Residue Asp303 is the Proton acceptor of the active site. Phosphoenolpyruvate-binding residues include Arg334, Arg375, and Lys400.

The protein belongs to the EPSP synthase family. As to quaternary structure, monomer.

It localises to the cytoplasm. The enzyme catalyses 3-phosphoshikimate + phosphoenolpyruvate = 5-O-(1-carboxyvinyl)-3-phosphoshikimate + phosphate. It participates in metabolic intermediate biosynthesis; chorismate biosynthesis; chorismate from D-erythrose 4-phosphate and phosphoenolpyruvate: step 6/7. Functionally, catalyzes the transfer of the enolpyruvyl moiety of phosphoenolpyruvate (PEP) to the 5-hydroxyl of shikimate-3-phosphate (S3P) to produce enolpyruvyl shikimate-3-phosphate and inorganic phosphate. This is 3-phosphoshikimate 1-carboxyvinyltransferase from Dehalococcoides mccartyi (strain ATCC BAA-2266 / KCTC 15142 / 195) (Dehalococcoides ethenogenes (strain 195)).